The following is a 174-amino-acid chain: Gamma-crystallin A (174 aa).

Beta/gamma crystallin 'Greek key' domains follow at residues 2–40 (GKIT…RVDS) and 41–83 (GCWM…RSIP). Residues 84 to 87 (YTSS) are connecting peptide. Beta/gamma crystallin 'Greek key' domains are found at residues 88 to 128 (HRIR…HVLE) and 129 to 171 (GSWV…RRVM).

This sequence belongs to the beta/gamma-crystallin family.

Its function is as follows. Crystallins are the dominant structural components of the vertebrate eye lens. The protein is Gamma-crystallin A (Cryga) of Rattus norvegicus (Rat).